The sequence spans 361 residues: Homer protein homolog 3 (361 aa).

The required for interaction with NFATC2 stretch occupies residues 1–80 (MSTAREQPIF…TKTSQKFGQW (80 aa)). In terms of domain architecture, WH1 spans 1–113 (MSTAREQPIF…EKFQEVKEAA (113 aa)). Residues 114-169 (RLAREKSQDGGELTSPALGLASHQVPPSPLVSANGPGEEKLFRSQSADAPGPTERE) form a disordered region. 2 positions are modified to phosphoserine: S120 and S159. Coiled coils occupy residues 191-243 (ALQD…SEVT) and 254-358 (GQSL…RLAE).

It belongs to the Homer family. In terms of assembly, tetramer. Isoform 1 and isoform 2 encode coiled-coil structures that mediate homo- and heteromultimerization. Interacts with NFATC2; interaction is calcium independent; interaction competes with PPP3CA for NFATC2 binding; interaction is reduced by AKT activation. Interacts with NFATC1 and NFATC4. Interacts with SHANK1; forms a high-order complex at least composed of SHANK1 and HOMER3; the complex formation is regulated by CAMK2A-mediated phosphorylation.

It is found in the cytoplasm. Its subcellular location is the postsynaptic density. It localises to the synapse. Functionally, postsynaptic density scaffolding protein. Binds and cross-links cytoplasmic regions of GRM1, GRM5, ITPR1, DNM3, RYR1, RYR2, SHANK1 and SHANK3. By physically linking GRM1 and GRM5 with ER-associated ITPR1 receptors, it aids the coupling of surface receptors to intracellular calcium release. Isoforms can be differently regulated and may play an important role in maintaining the plasticity at glutamatergic synapses. Negatively regulates T cell activation by inhibiting the calcineurin-NFAT pathway. Acts by competing with calcineurin/PPP3CA for NFAT protein binding, hence preventing NFAT activation by PPP3CA. The protein is Homer protein homolog 3 of Homo sapiens (Human).